Reading from the N-terminus, the 463-residue chain is Alpha-L-arabinofuranosidase B (463 aa).

Residues 1 to 26 (MIPQLNRNYAWAIALGLVARSSLVSA) form the signal peptide. Residues 27–308 (GPCDIYASGG…ILGIGGHNSK (282 aa)) form a catalytic region. Cysteines 29 and 39 form a disulfide. Asparagine 81 is a glycosylation site (N-linked (GlcNAc...) asparagine). Intrachain disulfides connect cysteine 89–cysteine 94 and cysteine 184–cysteine 185. Aspartate 227 provides a ligand contact to substrate. Glutamate 229 (nucleophile) is an active-site residue. Asparagine 230 contacts substrate. An N-linked (GlcNAc...) asparagine glycan is attached at asparagine 280. Glycine 304 provides a ligand contact to substrate. The interval 309-463 (LTVGSSISLR…VSWVVSASFA (155 aa)) is ABD. N-linked (GlcNAc...) asparagine glycosylation occurs at asparagine 332. A disulfide bridge connects residues cysteine 366 and cysteine 404. Positions 381, 383, 384, 428, 430, 433, and 453 each coordinate substrate.

The protein belongs to the glycosyl hydrolase 54 family. Residue Asn-280 is mannosylated with up to 7 mannose residues.

The protein localises to the secreted. It carries out the reaction Hydrolysis of terminal non-reducing alpha-L-arabinofuranoside residues in alpha-L-arabinosides.. It participates in glycan metabolism; L-arabinan degradation. Secreted alpha-L-arabinofuranosidase that actively hydrolyzes p-NP-alpha-L-arabinofuranoside and is specific for furanose configuration of the carbohydrate ring. Also exhibits significant activity against polymeric arabinose-containing substrates such as arabinan and arabinoxylan, a major component of plant hemicellulose. This Penicillium canescens protein is Alpha-L-arabinofuranosidase B (abfB).